The chain runs to 141 residues: U-scoloptoxin(17)-Er3a (141 aa).

Positions 1-21 (MKSTFALVFGILMVIAHLSFA) are cleaved as a signal peptide.

Belongs to the scoloptoxin-17 family. Contains 3 disulfide bonds. In terms of tissue distribution, expressed by the venom gland.

Its subcellular location is the secreted. In Ethmostigmus rubripes (Giant centipede), this protein is U-scoloptoxin(17)-Er3a.